The sequence spans 420 residues: Histidine--tRNA ligase (420 aa).

The protein belongs to the class-II aminoacyl-tRNA synthetase family. As to quaternary structure, homodimer.

It localises to the cytoplasm. It catalyses the reaction tRNA(His) + L-histidine + ATP = L-histidyl-tRNA(His) + AMP + diphosphate + H(+). The chain is Histidine--tRNA ligase from Anaplasma phagocytophilum (strain HZ).